A 373-amino-acid chain; its full sequence is Beta sliding clamp (373 aa).

Belongs to the beta sliding clamp family. In terms of assembly, forms a ring-shaped head-to-tail homodimer around DNA which binds and tethers DNA polymerases and other proteins to the DNA. The DNA replisome complex has a single clamp-loading complex (3 tau and 1 each of delta, delta', psi and chi subunits) which binds 3 Pol III cores (1 core on the leading strand and 2 on the lagging strand) each with a beta sliding clamp dimer. Additional proteins in the replisome are other copies of gamma, psi and chi, Ssb, DNA helicase and RNA primase.

Its subcellular location is the cytoplasm. Functionally, confers DNA tethering and processivity to DNA polymerases and other proteins. Acts as a clamp, forming a ring around DNA (a reaction catalyzed by the clamp-loading complex) which diffuses in an ATP-independent manner freely and bidirectionally along dsDNA. Initially characterized for its ability to contact the catalytic subunit of DNA polymerase III (Pol III), a complex, multichain enzyme responsible for most of the replicative synthesis in bacteria; Pol III exhibits 3'-5' exonuclease proofreading activity. The beta chain is required for initiation of replication as well as for processivity of DNA replication. The sequence is that of Beta sliding clamp (dnaN) from Mycoplasmopsis pulmonis (strain UAB CTIP) (Mycoplasma pulmonis).